The sequence spans 407 residues: 12S rRNA N(4)-cytidine methyltransferase METTL15 (407 aa).

Residues 100–102 (GGH), Asp-119, Phe-146, Asp-169, and Gln-176 each bind S-adenosyl-L-methionine. A Phosphoserine modification is found at Ser-358.

Belongs to the methyltransferase superfamily. RsmH family.

It localises to the mitochondrion matrix. It carries out the reaction cytidine(839) in 12S rRNA + S-adenosyl-L-methionine = N(4)-methylcytidine(839) in 12S rRNA + S-adenosyl-L-homocysteine + H(+). Its function is as follows. N4-methylcytidine (m4C) methyltransferase responsible for the methylation of position C839 in mitochondrial 12S rRNA. Involved in the stabilization of 12S rRNA folding, therefore facilitating the assembly of the mitochondrial small ribosomal subunits. This Pongo abelii (Sumatran orangutan) protein is 12S rRNA N(4)-cytidine methyltransferase METTL15 (METTL15).